The sequence spans 338 residues: MKNTADITVLGAGSYGTALAISLASNGHRTLLWGHEPEHIANLKKDKCNNEFLPGIALPDLLIPEADLATALAASNNVLVVVPSHVFGSVLSQAKPLLRDDARIIWATKGLEPETGRLLQEVARDILGEHYPLAVLSGPTFAKELAAGLPTAISIAGTDVNFIKDLVELLHSPKRLRVYENDDFTGLQLGGAVKNVIAISAGMSDGIGFGANARTALITRGLVELTRLGEAIGAQGATFMGMAGLGDLVLTCTDNQSRNRRFGLALGKGLDVETAQQEIGQVVEGYRNTKEVYTLAKRLGVEMPITEQVYKVLYQGGTPHEAAKALLGRDQKSETPDS.

Residues serine 14, tyrosine 15, histidine 35, and lysine 109 each contribute to the NADPH site. 3 residues coordinate sn-glycerol 3-phosphate: lysine 109, glycine 138, and threonine 140. Alanine 142 provides a ligand contact to NADPH. The sn-glycerol 3-phosphate site is built by lysine 194, aspartate 247, serine 257, arginine 258, and asparagine 259. Lysine 194 acts as the Proton acceptor in catalysis. Arginine 258 provides a ligand contact to NADPH. Positions 282 and 284 each coordinate NADPH.

It belongs to the NAD-dependent glycerol-3-phosphate dehydrogenase family.

It localises to the cytoplasm. The enzyme catalyses sn-glycerol 3-phosphate + NAD(+) = dihydroxyacetone phosphate + NADH + H(+). It catalyses the reaction sn-glycerol 3-phosphate + NADP(+) = dihydroxyacetone phosphate + NADPH + H(+). It participates in membrane lipid metabolism; glycerophospholipid metabolism. Its function is as follows. Catalyzes the reduction of the glycolytic intermediate dihydroxyacetone phosphate (DHAP) to sn-glycerol 3-phosphate (G3P), the key precursor for phospholipid synthesis. The polypeptide is Glycerol-3-phosphate dehydrogenase [NAD(P)+] (Shewanella sediminis (strain HAW-EB3)).